Reading from the N-terminus, the 94-residue chain is Late cornified envelope protein 3C (94 aa).

A compositionally biased stretch (low complexity) spans 1 to 10 (MSCQQNQQQC). 2 disordered regions span residues 1–35 (MSCQ…PPSS) and 65–94 (CRRQ…GGCC). Positions 11-34 (QPPPSCPSPKCPPKSPAQCLPPPS) are enriched in pro residues. The segment covering 78–94 (GQQGGGSCRGHGSGGCC) has biased composition (gly residues).

This sequence belongs to the LCE family. In terms of assembly, interacts with CYSRT1; the interaction is direct. Skin-specific. Expression was readily detected in adult trunk skin, adult arm skin, fetal skin, penal skin, vulva, esophagus and tongue. Not expressed in the cervix, rectum, lung, colon, or placenta.

A structural component of the cornified envelope of the stratum corneum involved in innate cutaneous host defense. Possesses defensin-like antimicrobial activity against a broad spectrum of Gram-positive and Gram-negative bacteria, both aerobic and anaerobic species. Upon inflammation, may regulate skin barrier repair by shaping cutaneous microbiota composition and immune response to bacterial antigens. This Homo sapiens (Human) protein is Late cornified envelope protein 3C.